Reading from the N-terminus, the 1484-residue chain is MKPRAECCSPKFWLVLAVLAVSGSRARSQKSPPSIGIAVILVGTSDEVAIKDAHEKDDFHHLSVVPRVELVAMNETDPKSIITRICDLMSDRKIQGVVFADDTDQEAIAQILDFISAQTLTPILGIHGGSSMIMADKDESSMFFQFGPSIEQQASVMLNIMEEYDWYIFSIVTTYFPGYQDFVNKIRSTIENSFVGWELEEVLLLDMSLDDGDSKIQNQLKKLQSPIILLYCTKEEATYIFEVANSVGLTGYGYTWIVPSLVAGDTDTVPAEFPTGLISVSYDEWDYGLPARVRDGIAIITTAASDMLSEHSFIPEPKSSCYNTHEKRIYQSNMLNRYLINVTFEGRNLSFSEDGYQMHPKLVIILLNKERKWERVGKWKDKSLQMKYYVWPRMCPETEEQEDDHLSIVTLEEAPFVIVESVDPLSGTCMRNTVPCQKRIVTENKTDEEPGYIKKCCKGFCIDILKKISKSVKFTYDLYLVTNGKHGKKINGTWNGMIGEVVMKRAYMAVGSLTINEERSEVVDFSVPFIETGISVMVSRSNGTVSPSAFLEPFSADVWVMMFVMLLIVSAVAVFVFEYFSPVGYNRCLADGREPGGPSFTIGKAIWLLWGLVFNNSVPVQNPKGTTSKIMVSVWAFFAVIFLASYTANLAAFMIQEEYVDQVSGLSDKKFQRPNDFSPPFRFGTVPNGSTERNIRNNYAEMHAYMGKFNQRGVDDALLSLKTGKLDAFIYDAAVLNYMAGRDEGCKLVTIGSGKVFASTGYGIAIQKDSGWKRQVDLAILQLFGDGEMEELEALWLTGICHNEKNEVMSSQLDIDNMAGVFYMLGAAMALSLITFICEHLFYWQFRHCFMGVCSGKPGMVFSISRGIYSCIHGVAIEERQSVMNSPTATMNNTHSNILRLLRTAKNMANLSGVNGSPQSALDFIRRESSVYDISEHRRSFTHSDCKSYNNPPCEENLFSDYISEVERTFGNLQLKDSNVYQDHYHHHHRPHSIGSASSIDGLYDCDNPPFTTQSRSISKKPLDIGLPSSKHSQLSDLYGKFSFKSDRYSGHDDLIRSDVSDISTHTVTYGNIEGNAAKRRKQQYKDSLKKRPASAKSRREFDEIELAYRRRPPRSPDHKRYFRDKEGLRDFYLDQFRTKENSPHWEHVDLTDIYKERSDDFKRDSVSGGGPCTNRSHIKHGTGDKHGVVSGVPAPWEKNLTNVEWEDRSGGNFCRSCPSKLHNYSTTVTGQNSGRQACIRCEACKKAGNLYDISEDNSLQELDQPAAPVAVTSNASTTKYPQSPTNSKAQKKNRNKLRRQHSYDTFVDLQKEEAALAPRSVSLKDKGRFMDGSPYAHMFEMSAGESTFANNKSSVPTAGHHHHNNPGGGYMLSKSLYPDRVTQNPFIPTFGDDQCLLHGSKSYFFRQPTVAGASKARPDFRALVTNKPVVSALHGAVPARFQKDICIGNQSNPCVPNNKNPRAFNGSSNGHVYEKLSSIESDV.

Positions 1-26 are cleaved as a signal peptide; that stretch reads MKPRAECCSPKFWLVLAVLAVSGSRA. At 27–555 the chain is on the extracellular side; that stretch reads RSQKSPPSIG…SPSAFLEPFS (529 aa). N-linked (GlcNAc...) asparagine glycosylation occurs at asparagine 74. A disulfide bridge connects residues cysteine 86 and cysteine 321. 2 residues coordinate Zn(2+): histidine 127 and glutamate 284. N-linked (GlcNAc...) asparagine glycans are attached at residues asparagine 341, asparagine 348, asparagine 444, and asparagine 491. Disulfide bonds link cysteine 429-cysteine 456 and cysteine 436-cysteine 457. L-glutamate is bound by residues threonine 514 and arginine 519. Asparagine 542 is a glycosylation site (N-linked (GlcNAc...) asparagine). The helical transmembrane segment at 556-576 threads the bilayer; the sequence is ADVWVMMFVMLLIVSAVAVFV. At 577–601 the chain is on the cytoplasmic side; sequence FEYFSPVGYNRCLADGREPGGPSFT. Positions 602–613 form an intramembrane region, discontinuously helical; it reads IGKAIWLLWGLV. The segment at 604–623 is pore-forming; it reads KAIWLLWGLVFNNSVPVQNP. At 614 to 627 the chain is on the cytoplasmic side; it reads FNNSVPVQNPKGTT. A helical membrane pass occupies residues 628–647; the sequence is SKIMVSVWAFFAVIFLASYT. Residues 648 to 819 are Extracellular-facing; sequence ANLAAFMIQE…SSQLDIDNMA (172 aa). Asparagine 688 carries an N-linked (GlcNAc...) asparagine glycan. L-glutamate-binding positions include 690 to 691 and aspartate 732; that span reads ST. The chain crosses the membrane as a helical span at residues 820 to 835; that stretch reads GVFYMLGAAMALSLIT. At 836 to 1484 the chain is on the cytoplasmic side; that stretch reads FICEHLFYWQ…EKLSSIESDV (649 aa). Phosphoserine occurs at positions 882, 886, 917, and 920. Tyrosine 962 and tyrosine 1039 each carry phosphotyrosine. Phosphoserine occurs at positions 1058, 1061, and 1064. Residues 1074–1097 form a disordered region; it reads EGNAAKRRKQQYKDSLKKRPASAK. Phosphotyrosine is present on residues tyrosine 1109 and tyrosine 1133. Residue serine 1143 is modified to Phosphoserine. Tyrosine 1155 bears the Phosphotyrosine mark. The tract at residues 1161–1194 is disordered; that stretch reads DFKRDSVSGGGPCTNRSHIKHGTGDKHGVVSGVP. Phosphoserine is present on residues serine 1255 and serine 1259. A disordered region spans residues 1271–1301; it reads AVTSNASTTKYPQSPTNSKAQKKNRNKLRRQ. Residues 1272-1289 show a composition bias toward polar residues; sequence VTSNASTTKYPQSPTNSK. Positions 1290-1301 are enriched in basic residues; that stretch reads AQKKNRNKLRRQ. Residues 1292-1304 form an interaction with DAPK1 region; the sequence is KKNRNKLRRQHSY. A Phosphoserine; by DAPK1 modification is found at serine 1303. Tyrosine 1474 is subject to Phosphotyrosine. The short motif at 1482–1484 is the PDZ-binding element; the sequence is SDV.

This sequence belongs to the glutamate-gated ion channel (TC 1.A.10.1) family. NR2B/GRIN2B subfamily. Heterotetramer. Forms heterotetrameric channels composed of two GluN1/zeta subunits (GRIN1), and two identical GluN2/epsilon subunits (GRIN2A, GRIN2B, GRIN2C or GRIN2D) or GluN3 subunits (GRIN3A or GRIN3B) (in vitro). Can also form heterotetrameric channels that contain at least two GluN1 subunits and at least two different GluN2 subunits (or a combination of one GluN2 and one GluN3 subunits) (in vitro). In vivo, the subunit composition may depend on the expression levels of the different subunits. Found in a complex with GRIN1 and GRIN3B. Found in a complex with GRIN1, GRIN3A and PPP2CB. Interacts with PDZ domains of PATJ, DLG3 and DLG4. Interacts with HIP1 and NETO1. Interacts with MAGI3. Interacts with DAPK1. Found in a complex with GRIN1 and PRR7. Interacts with PRR7. Interacts with CAMK2A. Interacts with ARC; preventing ARC oligomerization. Interacts with TMEM25. Interacts (via the extreme C-terminus) with FRMPD2 (via the second PDZ domain); the interaction is direct and is likely to promote NMDAR-mediated neural signal transmission. Interacts with FAM81A; the interaction facilitates condensate formation via liquid-liquid phase separation. Phosphorylated on tyrosine residues. Phosphorylation at Ser-1303 by DAPK1 enhances synaptic NMDA receptor channel activity. In terms of tissue distribution, primarily found in the fronto-parieto-temporal cortex and hippocampus pyramidal cells, lower expression in the basal ganglia.

It localises to the cell membrane. The protein localises to the postsynaptic cell membrane. The protein resides in the cell projection. Its subcellular location is the dendrite. It is found in the late endosome. It localises to the lysosome. The protein localises to the cytoplasm. The protein resides in the cytoskeleton. It carries out the reaction Ca(2+)(in) = Ca(2+)(out). It catalyses the reaction Na(+)(in) = Na(+)(out). The catalysed reaction is K(+)(in) = K(+)(out). Component of N-methyl-D-aspartate (NMDA) receptors (NMDARs) that function as heterotetrameric, ligand-gated cation channels with high calcium permeability and voltage-dependent block by Mg(2+). Participates in synaptic plasticity for learning and memory formation by contributing to the long-term depression (LTD) of hippocampus membrane currents. Channel activation requires binding of the neurotransmitter L-glutamate to the GluN2 subunit, glycine or D-serine binding to the GluN1 subunit, plus membrane depolarization to eliminate channel inhibition by Mg(2+). NMDARs mediate simultaneously the potasium efflux and the influx of calcium and sodium. Each GluN2 subunit confers differential attributes to channel properties, including activation, deactivation and desensitization kinetics, pH sensitivity, Ca2(+) permeability, and binding to allosteric modulators. In concert with DAPK1 at extrasynaptic sites, acts as a central mediator for stroke damage. Its phosphorylation at Ser-1303 by DAPK1 enhances synaptic NMDA receptor channel activity inducing injurious Ca2+ influx through them, resulting in an irreversible neuronal death. The polypeptide is Glutamate receptor ionotropic, NMDA 2B (Homo sapiens (Human)).